Here is a 717-residue protein sequence, read N- to C-terminus: Glutamine--fructose-6-phosphate aminotransferase [isomerizing] (717 aa).

The For GATase activity role is filled by Cys2. In terms of domain architecture, Glutamine amidotransferase type-2 spans 2–318 (CGIFGYCNYL…DDDLAHIYDG (317 aa)). Ser253 carries the post-translational modification Phosphoserine. Residue Thr334 is modified to Phosphothreonine. Ser336 is modified (phosphoserine). SIS domains lie at 390 to 529 (WLPV…DRVS) and 562 to 707 (CATE…VDFP).

The enzyme catalyses D-fructose 6-phosphate + L-glutamine = D-glucosamine 6-phosphate + L-glutamate. It participates in nucleotide-sugar biosynthesis; UDP-N-acetyl-alpha-D-glucosamine biosynthesis; alpha-D-glucosamine 6-phosphate from D-fructose 6-phosphate: step 1/1. Its function is as follows. Involved in amino sugar synthesis (formation of chitin, supplies the amino sugars of asparagine-linked oligosaccharides of glycoproteins). The protein is Glutamine--fructose-6-phosphate aminotransferase [isomerizing] (GFA1) of Saccharomyces cerevisiae (strain ATCC 204508 / S288c) (Baker's yeast).